We begin with the raw amino-acid sequence, 493 residues long: Glutamyl-tRNA(Gln) amidotransferase subunit A (493 aa).

Active-site charge relay system residues include lysine 79 and serine 159. Catalysis depends on serine 183, which acts as the Acyl-ester intermediate.

This sequence belongs to the amidase family. GatA subfamily. As to quaternary structure, heterotrimer of A, B and C subunits.

The enzyme catalyses L-glutamyl-tRNA(Gln) + L-glutamine + ATP + H2O = L-glutaminyl-tRNA(Gln) + L-glutamate + ADP + phosphate + H(+). In terms of biological role, allows the formation of correctly charged Gln-tRNA(Gln) through the transamidation of misacylated Glu-tRNA(Gln) in organisms which lack glutaminyl-tRNA synthetase. The reaction takes place in the presence of glutamine and ATP through an activated gamma-phospho-Glu-tRNA(Gln). The polypeptide is Glutamyl-tRNA(Gln) amidotransferase subunit A (Brucella suis (strain ATCC 23445 / NCTC 10510)).